Consider the following 245-residue polypeptide: Flavin mononucleotide hydrolase 1, chloroplatic (245 aa).

The N-terminal 26 residues, Met1–Arg26, are a transit peptide targeting the chloroplast.

This sequence belongs to the HAD-like hydrolase superfamily. DOG/GPP family. As to quaternary structure, homodimer. The cofactor is Mg(2+).

It localises to the plastid. Its subcellular location is the chloroplast stroma. It carries out the reaction FMN + H2O = riboflavin + phosphate. The enzyme catalyses 5-amino-6-(5-phospho-D-ribitylamino)uracil + H2O = 5-amino-6-(D-ribitylamino)uracil + phosphate. Functionally, FMN hydrolase that catalyzes the dephosphorylation of flavin mononucleotide (FMN) to riboflavin. Can also dephosphorylate 5-amino-6-(5-phospho-D-ribitylamino)uracil, also known as ARPP. Not required for riboflavin biosynthesis in planta, but may help maintaining flavin homeostasis within chloroplasts. This chain is Flavin mononucleotide hydrolase 1, chloroplatic, found in Arabidopsis thaliana (Mouse-ear cress).